A 199-amino-acid polypeptide reads, in one-letter code: Cytochrome c oxidase subunit 2 (199 aa).

A helical transmembrane segment spans residues 1–13; the sequence is AICSLVLYLLTLM. Topologically, residues 14 to 26 are mitochondrial matrix; sequence LMEKLSSNSVDAQ. The chain crosses the membrane as a helical span at residues 27–54; it reads EVELVWTILPAIVLILLALPSLQILYMM. Topologically, residues 55–199 are mitochondrial intermembrane; it reads DEIDEPDLTL…SSLLSTSSSL (145 aa). Residues histidine 128, cysteine 163, glutamate 165, cysteine 167, histidine 171, and methionine 174 each contribute to the Cu cation site. Position 165 (glutamate 165) interacts with Mg(2+).

Belongs to the cytochrome c oxidase subunit 2 family. Component of the cytochrome c oxidase (complex IV, CIV), a multisubunit enzyme composed of 14 subunits. The complex is composed of a catalytic core of 3 subunits MT-CO1, MT-CO2 and MT-CO3, encoded in the mitochondrial DNA, and 11 supernumerary subunits COX4I, COX5A, COX5B, COX6A, COX6B, COX6C, COX7A, COX7B, COX7C, COX8 and NDUFA4, which are encoded in the nuclear genome. The complex exists as a monomer or a dimer and forms supercomplexes (SCs) in the inner mitochondrial membrane with NADH-ubiquinone oxidoreductase (complex I, CI) and ubiquinol-cytochrome c oxidoreductase (cytochrome b-c1 complex, complex III, CIII), resulting in different assemblies (supercomplex SCI(1)III(2)IV(1) and megacomplex MCI(2)III(2)IV(2)). Found in a complex with TMEM177, COA6, COX18, COX20, SCO1 and SCO2. Interacts with TMEM177 in a COX20-dependent manner. Interacts with COX20. Interacts with COX16. Cu cation serves as cofactor.

The protein localises to the mitochondrion inner membrane. It catalyses the reaction 4 Fe(II)-[cytochrome c] + O2 + 8 H(+)(in) = 4 Fe(III)-[cytochrome c] + 2 H2O + 4 H(+)(out). Component of the cytochrome c oxidase, the last enzyme in the mitochondrial electron transport chain which drives oxidative phosphorylation. The respiratory chain contains 3 multisubunit complexes succinate dehydrogenase (complex II, CII), ubiquinol-cytochrome c oxidoreductase (cytochrome b-c1 complex, complex III, CIII) and cytochrome c oxidase (complex IV, CIV), that cooperate to transfer electrons derived from NADH and succinate to molecular oxygen, creating an electrochemical gradient over the inner membrane that drives transmembrane transport and the ATP synthase. Cytochrome c oxidase is the component of the respiratory chain that catalyzes the reduction of oxygen to water. Electrons originating from reduced cytochrome c in the intermembrane space (IMS) are transferred via the dinuclear copper A center (CU(A)) of subunit 2 and heme A of subunit 1 to the active site in subunit 1, a binuclear center (BNC) formed by heme A3 and copper B (CU(B)). The BNC reduces molecular oxygen to 2 water molecules using 4 electrons from cytochrome c in the IMS and 4 protons from the mitochondrial matrix. This Apteryx australis (Southern brown kiwi) protein is Cytochrome c oxidase subunit 2 (MT-CO2).